Consider the following 1436-residue polypeptide: tRNA (guanosine(18)-2'-O)-methyltransferase (1436 aa).

Residues L1365–Q1367, G1389, and I1409–M1418 contribute to the S-adenosyl-L-methionine site.

It belongs to the class IV-like SAM-binding methyltransferase superfamily. RNA methyltransferase TrmH family.

Its subcellular location is the cytoplasm. It carries out the reaction guanosine(18) in tRNA + S-adenosyl-L-methionine = 2'-O-methylguanosine(18) in tRNA + S-adenosyl-L-homocysteine + H(+). Functionally, S-adenosyl-L-methionine-dependent 2'-O-ribose methyltransferase that catalyzes the formation of 2'-O-methylguanosine at position 18 (Gm18) in various tRNAs. The protein is tRNA (guanosine(18)-2'-O)-methyltransferase of Saccharomyces cerevisiae (strain ATCC 204508 / S288c) (Baker's yeast).